Here is a 254-residue protein sequence, read N- to C-terminus: Imidazole glycerol phosphate synthase subunit HisF (254 aa).

Residues Asp12 and Asp131 contribute to the active site.

Belongs to the HisA/HisF family. In terms of assembly, heterodimer of HisH and HisF.

The protein localises to the cytoplasm. The catalysed reaction is 5-[(5-phospho-1-deoxy-D-ribulos-1-ylimino)methylamino]-1-(5-phospho-beta-D-ribosyl)imidazole-4-carboxamide + L-glutamine = D-erythro-1-(imidazol-4-yl)glycerol 3-phosphate + 5-amino-1-(5-phospho-beta-D-ribosyl)imidazole-4-carboxamide + L-glutamate + H(+). Its pathway is amino-acid biosynthesis; L-histidine biosynthesis; L-histidine from 5-phospho-alpha-D-ribose 1-diphosphate: step 5/9. In terms of biological role, IGPS catalyzes the conversion of PRFAR and glutamine to IGP, AICAR and glutamate. The HisF subunit catalyzes the cyclization activity that produces IGP and AICAR from PRFAR using the ammonia provided by the HisH subunit. The chain is Imidazole glycerol phosphate synthase subunit HisF from Herminiimonas arsenicoxydans.